A 163-amino-acid polypeptide reads, in one-letter code: Nucleotide-binding protein Noca_0564 (163 aa).

The protein belongs to the YajQ family.

Its function is as follows. Nucleotide-binding protein. The protein is Nucleotide-binding protein Noca_0564 of Nocardioides sp. (strain ATCC BAA-499 / JS614).